The following is a 267-amino-acid chain: Trehalose 2-sulfotransferase (267 aa).

Alpha,alpha-trehalose contacts are provided by residues Q14, E33–Q39, P48, and W53. The active-site Proton acceptor is the E36.

It belongs to the Stf0 sulfotransferase family. As to quaternary structure, homodimer.

It catalyses the reaction alpha,alpha-trehalose + 3'-phosphoadenylyl sulfate = 2-O-sulfo-alpha,alpha-trehalose + adenosine 3',5'-bisphosphate + H(+). Its pathway is glycolipid metabolism. Catalyzes the sulfuryl group transfer from 3'-phosphoadenosine-5'-phosphosulfate (PAPS) to trehalose, leading to trehalose-2-sulfate (T2S). The sulfation of trehalose is the first step in the biosynthesis of sulfolipid-1 (SL-1), a major cell wall glycolipid in pathogenic mycobacteria. Cannot use free glucose and unnatural stereoisomers of trehalose (alpha,beta (neo-trehalose) and beta,beta (iso-trehalose)) as substrates. In Mycolicibacterium smegmatis (strain ATCC 700084 / mc(2)155) (Mycobacterium smegmatis), this protein is Trehalose 2-sulfotransferase.